We begin with the raw amino-acid sequence, 447 residues long: Selenide, water dikinase 3 (447 aa).

The active site involves selenocysteine 50. Position 50 (selenocysteine 50) is a non-standard amino acid, selenocysteine. ATP contacts are provided by residues lysine 53, 103–105 (GMD), aspartate 123, aspartate 146, and 197–200 (GGQT). Position 105 (aspartate 105) interacts with Mg(2+). Aspartate 146 is a Mg(2+) binding site. Aspartate 301 contributes to the Mg(2+) binding site.

It belongs to the selenophosphate synthase 1 family. As to quaternary structure, homodimer. Mg(2+) serves as cofactor. In the embryo, expressed in retina, olfactory vesicles, tectum, pronephros ducts and myotomes at 24 hours post-fertilization and in retina, tectum, liver and intestinal bulb 3 days after fertilization.

The enzyme catalyses hydrogenselenide + ATP + H2O = selenophosphate + AMP + phosphate + 2 H(+). Synthesizes selenophosphate from selenide and ATP. The chain is Selenide, water dikinase 3 from Danio rerio (Zebrafish).